The sequence spans 315 residues: Protein sprouty homolog 2 (315 aa).

Positions 1-15 (MEARAQSGNGSQPLL) are enriched in polar residues. Residues 1 to 140 (MEARAQSGNG…SEQRLLGSSF (140 aa)) form a disordered region. The segment covering 20–32 (DGGRPRGEPDPRD) has biased composition (basic and acidic residues). The segment covering 108–140 (SRSISTVSSGSRSSTRTSTSSSSSEQRLLGSSF) has biased composition (low complexity). A required for interaction with CAV1 region spans residues 118-315 (SRSSTRTSTS…VPRRNFEKPT (198 aa)). Residues 177–291 (RCEDCGKCKC…CYDRVNRPGC (115 aa)) form the SPR domain. The tract at residues 178-315 (CEDCGKCKCK…VPRRNFEKPT (138 aa)) is required for interaction with TESK1.

This sequence belongs to the sprouty family. In terms of assembly, forms heterodimers with SPRY1. Forms a tripartite complex containing GAB1, METTL13 and SPRY2. Within the complex interacts with METTL13. Interacts with RAF1. Interacts (via C-terminus) with TESK1 (via C-terminus); the interaction disrupts SPRY2 interaction with GRB2, potentially via disruption of SPRY2 serine dephosphorylation. Interacts with PPP2R1A/PP2A-A and PPP2CA/PP2A-C; the interaction with PPP2CA/PP2A-C is inhibited by interaction with TESK1, possibly by vesicular sequestration of SPRY2. Inhibition of the interaction with the serine/threonine-protein phosphatase 2A (PP2A) holoenzyme results in loss of PP2A-mediated dephosphorylation, resulting in the loss of SPRY2 interaction with GRB2. Interacts with GRB2. Interacts with CBL/C-CBL; the interaction inhibits CBL-mediated ubiquitination of EGFR. Interacts (via C-terminus) with CAV1 (via C-terminus). In terms of processing, cleaved at Pro-144 by the prolyl endopeptidase FAP (seprase) activity (in vitro).

It is found in the cytoplasm. The protein localises to the cytoskeleton. Its subcellular location is the cell projection. The protein resides in the ruffle membrane. In terms of biological role, antagonist of fibroblast growth factor (FGF) pathways via inhibition of FGF-mediated phosphorylation of ERK1/2. Thereby acts as an antagonist of FGF-induced retinal lens fiber differentiation, may inhibit limb bud outgrowth and may negatively modulate respiratory organogenesis. Inhibits TGFB-induced epithelial-to-mesenchymal transition in retinal lens epithelial cells. Inhibits CBL/C-CBL-mediated EGFR ubiquitination. The polypeptide is Protein sprouty homolog 2 (SPRY2) (Pongo abelii (Sumatran orangutan)).